Consider the following 731-residue polypeptide: Polyribonucleotide nucleotidyltransferase (731 aa).

The Mg(2+) site is built by D488 and D494. Residues 555-614 (PRIEVINIAVDKIRDVIGSGGKVIREIVEQTGAKINIEDDGTIKIASADAKTIEAAKRWI) enclose the KH domain. In terms of domain architecture, S1 motif spans 624 to 692 (GAIYQGTVVK…ERGKVRLSMK (69 aa)). Residues 693–731 (AVDQKTGKEMTDDKSVKEEKCMDEKKQPENKRRRKKKEE) form a disordered region. Basic and acidic residues predominate over residues 694–722 (VDQKTGKEMTDDKSVKEEKCMDEKKQPEN).

Belongs to the polyribonucleotide nucleotidyltransferase family. Mg(2+) is required as a cofactor.

It is found in the cytoplasm. It catalyses the reaction RNA(n+1) + phosphate = RNA(n) + a ribonucleoside 5'-diphosphate. Its function is as follows. Involved in mRNA degradation. Catalyzes the phosphorolysis of single-stranded polyribonucleotides processively in the 3'- to 5'-direction. The sequence is that of Polyribonucleotide nucleotidyltransferase from Bartonella tribocorum (strain CIP 105476 / IBS 506).